The chain runs to 396 residues: 3-amino-4-hydroxybenzoate 2-monooxygenase PtnB3 (396 aa).

FAD-binding positions include A19, 38–39 (EQ), and R112. Y217 serves as the catalytic Proton acceptor. Residue D295 coordinates FAD.

Belongs to the 6-hydroxynicotinate 3-monooxygenase family. FAD serves as cofactor.

It carries out the reaction 3-amino-4-hydroxybenzoate + NADPH + O2 + H(+) = 3-amino-2,4-dihydroxybenzoate + NADP(+) + H2O. It participates in antibiotic biosynthesis. In terms of biological role, part of a gene cluster involved in the biosynthesis of thioplatencin (ThioPTN) and platencin (PTN), potent and selective inhibitors of bacterial and mammalian fatty acid synthases. Catalyzes the hydroxylation of 3-amino-4-hydroxybenzoate (3,4-AHBA) to 3-amino-2,4-dihydroxybenzoate (3,2,4-ADHBA). This chain is 3-amino-4-hydroxybenzoate 2-monooxygenase PtnB3, found in Streptomyces platensis.